The chain runs to 772 residues: Semaphorin-3A (772 aa).

The first 20 residues, 1 to 20 (MGWFTGIACLFWGILLTARA), serve as a signal peptide directing secretion. Residues 31 to 514 (RLKLSYKEML…STAGVAQLPL (484 aa)) form the Sema domain. Asn53 carries N-linked (GlcNAc...) asparagine glycosylation. Cys103 and Cys114 form a disulfide bridge. Asn125 is a glycosylation site (N-linked (GlcNAc...) asparagine). 4 disulfide bridges follow: Cys132–Cys141, Cys269–Cys381, Cys293–Cys341, and Cys517–Cys535. One can recognise an Ig-like C2-type domain in the interval 577-665 (HGHSLEERII…GFMQTLLKVT (89 aa)). Asn591 carries an N-linked (GlcNAc...) asparagine glycan. The cysteines at positions 650 and 723 are disulfide-linked. Residues 677–691 (LLHKDDDGDGSKTKE) are compositionally biased toward basic and acidic residues. 2 disordered regions span residues 677–698 (LLHK…SMTP) and 729–772 (RDRK…PRSV). Over residues 729–738 (RDRKQRRQRP) the composition is skewed to basic residues. A compositionally biased stretch (basic and acidic residues) spans 750–772 (HMQESKKGRNRRTHEFERAPRSV).

The protein belongs to the semaphorin family. As to quaternary structure, interacts with PLXND1. As to expression, expressed in the dorsal root ganglia.

The protein resides in the secreted. Functionally, may be involved in guiding growing axons towards their targets by forming a molecular boundary that instructs axons to engage in the formation of specific nerve tracts. Binds to neuropilin. Involved in the development of the olfactory system and in neuronal control of puberty. The protein is Semaphorin-3A (Sema3a) of Rattus norvegicus (Rat).